Consider the following 45-residue polypeptide: Photosystem II reaction center protein K (45 aa).

Residues 1–8 (MEAALLLA) constitute a propeptide that is removed on maturation. The chain crosses the membrane as a helical span at residues 24-44 (LPIIPLFFLALAFVWQAAVGF).

It belongs to the PsbK family. In terms of assembly, PSII is composed of 1 copy each of membrane proteins PsbA, PsbB, PsbC, PsbD, PsbE, PsbF, PsbH, PsbI, PsbJ, PsbK, PsbL, PsbM, PsbT, PsbX, PsbY, PsbZ, Psb30/Ycf12, peripheral proteins PsbO, CyanoQ (PsbQ), PsbU, PsbV and a large number of cofactors. It forms dimeric complexes.

The protein localises to the cellular thylakoid membrane. In terms of biological role, one of the components of the core complex of photosystem II (PSII). PSII is a light-driven water:plastoquinone oxidoreductase that uses light energy to abstract electrons from H(2)O, generating O(2) and a proton gradient subsequently used for ATP formation. It consists of a core antenna complex that captures photons, and an electron transfer chain that converts photonic excitation into a charge separation. The sequence is that of Photosystem II reaction center protein K from Rippkaea orientalis (strain PCC 8801 / RF-1) (Cyanothece sp. (strain PCC 8801)).